The primary structure comprises 1941 residues: Diacylglycerol kinase eta (1941 aa).

Residues 93–186 form the PH domain; sequence SIIKEGYLLK…WLGSLKAATA (94 aa). 2 consecutive Phorbol-ester/DAG-type zinc fingers follow at residues 206–256 and 279–330; these read HHHW…IANC and PHQW…AIAC. Residues 361-497 form the DAGKc domain; it reads GNFSPLLVFV…DRWSIMVFEK (137 aa). 4 disordered regions span residues 1030-1068, 1132-1164, 1215-1257, and 1276-1295; these read TTTL…SPPR, CNSN…ETPT, LESA…PSSS, and RRHS…KDKD. Over residues 1133–1155 the composition is skewed to low complexity; it reads NSNNNSNNNSNSNSNNNNHNDGN. The region spanning 1878–1941 is the SAM domain; sequence WSVNEVVTWL…LQAIKDLSEN (64 aa).

This sequence belongs to the eukaryotic diacylglycerol kinase family.

It is found in the cytoplasm. It carries out the reaction a 1,2-diacyl-sn-glycerol + ATP = a 1,2-diacyl-sn-glycero-3-phosphate + ADP + H(+). In terms of biological role, phosphorylates diacylglycerol (DAG) to generate phosphatidic acid (PA). In Drosophila grimshawi (Hawaiian fruit fly), this protein is Diacylglycerol kinase eta.